The chain runs to 344 residues: Autoinducer 2 import system permease protein LsrC (344 aa).

9 helical membrane passes run 13 to 33, 38 to 58, 69 to 89, 90 to 110, 114 to 134, 155 to 175, 212 to 232, 251 to 271, and 283 to 303; these read FFAI…YFIL, MIFA…LVML, TVGL…GLAT, AIAF…LLVV, IPAI…MLLW, FIGV…GGWL, LNGM…GFVP, GISL…AFFL, and LPAW…LVLD. A disordered region spans residues 323–344; that stretch reads QPGNKGSKQVARFPERKSKEVA. Residues 335–344 are compositionally biased toward basic and acidic residues; it reads FPERKSKEVA.

The protein belongs to the binding-protein-dependent transport system permease family. AraH/RbsC subfamily. In terms of assembly, the complex is composed of two ATP-binding proteins (LsrA), two transmembrane proteins (LsrC and LsrD) and a solute-binding protein (LsrB).

Its subcellular location is the cell inner membrane. Part of the ABC transporter complex LsrABCD involved in autoinducer 2 (AI-2) import. Probably responsible for the translocation of the substrate across the membrane. The sequence is that of Autoinducer 2 import system permease protein LsrC (lsrC) from Klebsiella pneumoniae subsp. pneumoniae (strain ATCC 700721 / MGH 78578).